The sequence spans 186 residues: Large ribosomal subunit protein uL22 (186 aa).

Composition is skewed to basic and acidic residues over residues 157 to 167 and 177 to 186; these read VSKATDDEPTK and RQKEKMLRSE. The disordered stretch occupies residues 157 to 186; that stretch reads VSKATDDEPTKKKLSKKKLQRQKEKMLRSE.

It belongs to the universal ribosomal protein uL22 family.

This is Large ribosomal subunit protein uL22 (RpL17) from Drosophila yakuba (Fruit fly).